Consider the following 579-residue polypeptide: Solute carrier family 15 member 5 (579 aa).

11 helical membrane-spanning segments follow: residues 77–97 (CQAAILNLCFIGTSILTPVFV), 110–130 (LVYICLFLHFLGTALLSVVAF), 154–174 (LFYVALLTICLGIGGVRAIVC), 191–211 (SFFNWFYWLMNLNATIVFLGI), 221–241 (ALVLLIPFMSMLMAVITLHMI), 304–324 (TFFLTLLPLFIFQLLYRMCIM), 343–363 (GFLLPIAVMNAISSLPLLILA), 386–406 (CIIAGNLFAALSVMIAGFFEI), 422–442 (VLTVSSMPCFYLILQYVLLGV), 472–492 (TLFNGFGCFTGALLVKLVYLI), and 509–529 (SFFFFLASLTLLNVLGFCSVS).

This sequence belongs to the major facilitator superfamily. Proton-dependent oligopeptide transporter (POT/PTR) (TC 2.A.17) family.

The protein resides in the membrane. Proton oligopeptide cotransporter. In Homo sapiens (Human), this protein is Solute carrier family 15 member 5 (SLC15A5).